The following is a 342-amino-acid chain: Phosphoribosylformylglycinamidine cyclo-ligase (342 aa).

Belongs to the AIR synthase family.

The protein localises to the cytoplasm. It carries out the reaction 2-formamido-N(1)-(5-O-phospho-beta-D-ribosyl)acetamidine + ATP = 5-amino-1-(5-phospho-beta-D-ribosyl)imidazole + ADP + phosphate + H(+). The protein operates within purine metabolism; IMP biosynthesis via de novo pathway; 5-amino-1-(5-phospho-D-ribosyl)imidazole from N(2)-formyl-N(1)-(5-phospho-D-ribosyl)glycinamide: step 2/2. This is Phosphoribosylformylglycinamidine cyclo-ligase from Staphylococcus aureus (strain Mu3 / ATCC 700698).